The following is a 362-amino-acid chain: Transcription factor bHLH133 (362 aa).

A bHLH domain is found at 209-258 (LQVPSSQSTLKVRKEKLGGRIASLHQLVSPFGKTDTASVLSEAIGYIRFL).

Belongs to the bHLH protein family. As to quaternary structure, homodimer.

Its subcellular location is the nucleus. In Arabidopsis thaliana (Mouse-ear cress), this protein is Transcription factor bHLH133 (BHLH133).